Reading from the N-terminus, the 113-residue chain is Urocortin-2 (113 aa).

The first 23 residues, 1–23 (MMTRWALVVFVVLMLDRILFVPG), serve as a signal peptide directing secretion. Positions 24-71 (TPIPTFQLLPQNSLETTPSSVTSESSSGTTTGPSASWSNSKASPYLDT) are excised as a propeptide. Over residues 37–61 (LETTPSSVTSESSSGTTTGPSASWS) the composition is skewed to low complexity. A disordered region spans residues 37-64 (LETTPSSVTSESSSGTTTGPSASWSNSK). A Valine amide; partial modification is found at Val-110.

This sequence belongs to the sauvagine/corticotropin-releasing factor/urotensin I family. In terms of assembly, binds with high affinity to CRF receptors 2-alpha and 2-beta. Post-translationally, glycosylated.

The protein resides in the secreted. Suppresses food intake, delays gastric emptying and decreases heat-induced edema. Might represent an endogenous ligand for maintaining homeostasis after stress. In Mus musculus (Mouse), this protein is Urocortin-2 (Ucn2).